The sequence spans 860 residues: Valine--tRNA ligase (860 aa).

Residues 53-63 carry the 'HIGH' region motif; that stretch reads PNLTGILHIGH. The 'KMSKS' region motif lies at 527-531; the sequence is KMSKS. Position 530 (lysine 530) interacts with ATP. Residues 794 to 860 adopt a coiled-coil conformation; that stretch reads QDKTKIVDKL…LKQDKLNSLK (67 aa).

Belongs to the class-I aminoacyl-tRNA synthetase family. ValS type 1 subfamily. In terms of assembly, monomer.

It is found in the cytoplasm. It carries out the reaction tRNA(Val) + L-valine + ATP = L-valyl-tRNA(Val) + AMP + diphosphate. Its function is as follows. Catalyzes the attachment of valine to tRNA(Val). As ValRS can inadvertently accommodate and process structurally similar amino acids such as threonine, to avoid such errors, it has a 'posttransfer' editing activity that hydrolyzes mischarged Thr-tRNA(Val) in a tRNA-dependent manner. The chain is Valine--tRNA ligase from Mycoplasmoides gallisepticum (strain R(low / passage 15 / clone 2)) (Mycoplasma gallisepticum).